Reading from the N-terminus, the 69-residue chain is Fumarase D (69 aa).

The protein belongs to the FumD family.

It carries out the reaction (S)-malate = fumarate + H2O. Its function is as follows. In vitro catalyzes the addition of water to fumarate, forming malate. Cannot catalyze the reverse reaction. Cannot use the cis-isomer maleate as substrate. This is Fumarase D from Shigella flexneri.